We begin with the raw amino-acid sequence, 61 residues long: Large ribosomal subunit protein bL28 (61 aa).

This sequence belongs to the bacterial ribosomal protein bL28 family.

The protein is Large ribosomal subunit protein bL28 of Lachnospira eligens (strain ATCC 27750 / DSM 3376 / VPI C15-48 / C15-B4) (Eubacterium eligens).